Reading from the N-terminus, the 459-residue chain is Acetyltransferase pigO (459 aa).

Belongs to the trichothecene O-acetyltransferase family.

It participates in secondary metabolite biosynthesis. Functionally, acetyltransferase; part of the gene cluster that mediates the biosynthesis of azaphilone pigments (MonAzPs), a complex mixture of compounds with a common azaphilone skeleton very widely used as food colorants. PigM and pigO are involved in the elimination of the omega-1 alcohol with pigM acting as an O-acetyltransferase that synthesizes the O-11 acetyl intermediate whereas pigO eliminates acetic acid to yield an intermediate with a C10(11) double bond. The first step of the pathway is performed by the nrPKS pigA that forms the hexaketide precursor from successive condensations of five malonyl-CoA units, with a simple acetyl-CoA starter unit. The role of esterase pigG is not clear, but it may play at most a supplementary role in the formation of the benzaldehyde produced by the pigA nrPKS. This very reactive benzaldehyde is intercepted by the pigC ketoreductase that to provide the first stable enzyme-free MonAzPs intermediate, 6-(4-hydroxy-2-oxopentyl)-3-methyl-2,4-dioxocyclohexane carbaldehyde, also known as M7PKS-1. The FAD-dependent monooxygenase pigN hydroxylates M7PKS-1 at C-4, which triggers the formation of the pyran ring. PigJ, pigK and pigD are involved in the acetylation of the pyran ring. PigJ and pigK form the two subunits of a dedicated fungal FAS that produces the side chain fatty acyl moiety of MonAzPs and pigD transfers the fatty acyl chain to the C-4 alcohol. PigM and pigO are involved in the elimination of the omega-1 alcohol. PigM acts as an O-acetyltransferase that synthesizes the putative O-11 acetyl intermediate whereas pigO eliminates acetic acid to yield an intermediate with a C10(11) double bond. The dehydration of the C-11 alcohol followed by the reduction of the C6(7) double bond by the NAD(P)H-dependent oxidoreductase pigE increases the electrophilicity of the C-5 ketone of the resulting acyl benzopyran. This in turn sets up the C-5 ketone for an intramolecular Knoevenagel aldol condensation with the C-20 enol of the side chain. This condensation affords the characteristic linear tricyclic carbon skeletons of the yellow pigments that serve as the common precursors for the classical yellow pigments monascin and ankaflavin, orange pigments rubopunctatin and monascorubrin, and red pigments ribropunctamine and monascorubramine. The FAD-dependent oxidoreductase pigF is especially invoved in the biosynthesis of orange and red pigments via desaturation of C6(7). This chain is Acetyltransferase pigO, found in Monascus ruber (Mold).